The primary structure comprises 775 residues: Subtilisin-like protease SBT1.2 (775 aa).

Positions 1 to 20 (MEPKPFFLCIIFLLFCSSSS) are cleaved as a signal peptide. The 85-residue stretch at 27–111 (TYIVQLHPNS…AVRPDHVLQV (85 aa)) folds into the Inhibitor I9 domain. One can recognise a Peptidase S8 domain in the interval 116–618 (SYKFLGLDGF…AGHVNPQKAI (503 aa)). Residues D146 and H222 each act as charge relay system in the active site. Residues 388-470 (GGDKGSEFCL…YTESVLLKAY (83 aa)) enclose the PA domain. N-linked (GlcNAc...) asparagine glycosylation is found at N472 and N544. S552 acts as the Charge relay system in catalysis. The N-linked (GlcNAc...) asparagine glycan is linked to N652.

Belongs to the peptidase S8 family. Mostly expressed in leaves and cotyledons (especially in epidermal cells), and, to a lower extent, in floral buds, stems, and siliques. Strongly expressed in stomatal precursor cells (meristemoids and guard mother cells).

Its subcellular location is the secreted. The protein resides in the extracellular space. The protein localises to the apoplast. It localises to the cell membrane. Serine protease involved in the negative regulation of stomatal density and distribution. Not active on EPFL6 (AC Q1PEY6). Positive regulator of water use efficiency (WUE). This Arabidopsis thaliana (Mouse-ear cress) protein is Subtilisin-like protease SBT1.2.